Here is a 234-residue protein sequence, read N- to C-terminus: MKKIVISLGGSVLVPSLESNNIDRYVSVLKKISGTCRIFVVVGGGGEARRYIGVARSLGAGEAAADELGIMVTRLNARLLIAGLGDAAYPRVAENYTEAQEFAQAGKIVVMGGITPAQTTDAVSAVLAESVGAALLINATSVNGIYSADPKKDAGAVRHERLTPRELLDIITGSRMDAGANTVLDIVAGKVIERSGIPLLVLDGRDPENLYRAIVEGVCVGTVVCEEGSTPLPS.

10-11 is a binding site for ATP; that stretch reads GS. Residue G44 coordinates UMP. The ATP site is built by G45 and R49. UMP contacts are provided by residues D66 and 114–120; that span reads ITPAQTT. 3 residues coordinate ATP: T140, Y146, and D149.

This sequence belongs to the UMP kinase family. Homohexamer.

Its subcellular location is the cytoplasm. It catalyses the reaction UMP + ATP = UDP + ADP. The protein operates within pyrimidine metabolism; CTP biosynthesis via de novo pathway; UDP from UMP (UMPK route): step 1/1. With respect to regulation, inhibited by UTP. In terms of biological role, catalyzes the reversible phosphorylation of UMP to UDP. This Methanoculleus marisnigri (strain ATCC 35101 / DSM 1498 / JR1) protein is Uridylate kinase.